A 177-amino-acid polypeptide reads, in one-letter code: Insertion element IS1223 uncharacterized 20.7 kDa protein (177 aa).

Positions 112-131 (KQKGRPRKVPKKSKKTTKKL) are disordered. Positions 113–128 (QKGRPRKVPKKSKKTT) are enriched in basic residues.

The protein belongs to the IS150/IS1296 orfA family.

In Lactobacillus johnsonii, this protein is Insertion element IS1223 uncharacterized 20.7 kDa protein.